We begin with the raw amino-acid sequence, 439 residues long: tRNA modification GTPase MnmE (439 aa).

(6S)-5-formyl-5,6,7,8-tetrahydrofolate contacts are provided by Arg-20, Glu-78, and Lys-116. The region spanning Gly-211–Glu-364 is the TrmE-type G domain. GTP is bound by residues Asn-221–Thr-226, Ser-240–Thr-246, and Asp-265–Gly-268. The Mg(2+) site is built by Ser-225 and Thr-246. Lys-439 serves as a coordination point for (6S)-5-formyl-5,6,7,8-tetrahydrofolate.

This sequence belongs to the TRAFAC class TrmE-Era-EngA-EngB-Septin-like GTPase superfamily. TrmE GTPase family. In terms of assembly, homodimer. Heterotetramer of two MnmE and two MnmG subunits. The cofactor is K(+).

It localises to the cytoplasm. In terms of biological role, exhibits a very high intrinsic GTPase hydrolysis rate. Involved in the addition of a carboxymethylaminomethyl (cmnm) group at the wobble position (U34) of certain tRNAs, forming tRNA-cmnm(5)s(2)U34. The polypeptide is tRNA modification GTPase MnmE (Ehrlichia ruminantium (strain Welgevonden)).